The chain runs to 411 residues: Pyridinium-3,5-bisthiocarboxylic acid mononucleotide nickel insertion protein (411 aa).

The protein belongs to the LarC family.

The enzyme catalyses Ni(II)-pyridinium-3,5-bisthiocarboxylate mononucleotide = pyridinium-3,5-bisthiocarboxylate mononucleotide + Ni(2+). In terms of biological role, involved in the biosynthesis of a nickel-pincer cofactor ((SCS)Ni(II) pincer complex). Binds Ni(2+), and functions in nickel delivery to pyridinium-3,5-bisthiocarboxylic acid mononucleotide (P2TMN), to form the mature cofactor. Is thus probably required for the activation of nickel-pincer cofactor-dependent enzymes. This is Pyridinium-3,5-bisthiocarboxylic acid mononucleotide nickel insertion protein from Geobacillus kaustophilus (strain HTA426).